The primary structure comprises 788 residues: Protein TRS1 (788 aa).

Disordered stretches follow at residues 1-82 (MAQR…NFWH) and 610-663 (IHKK…PSRV). Residues 16–25 (RGRGAGGPSG) show a composition bias toward gly residues. The span at 26 to 56 (VGSSPPSSCVPMGATSTAGTGASAAPTATPG) shows a compositional bias: low complexity. Residues 74 to 248 (SGNNSNFWHG…HGAGEVVRLY (175 aa)) are RNA-binding. The segment covering 651 to 660 (LRRDDEDWKP) has biased composition (basic and acidic residues). The interval 672 to 788 (LDETFWVLGS…NVATHYHYNA (117 aa)) is interaction with host EIF2AK2/PKR.

The protein belongs to the herpesviridae US22 family. In terms of assembly, interacts with host EIF2AK2/PKR; this interaction retains EIF2AK2 to the host nucleus and prevents its activation. Interaction (via N-terminus) with host BECN1; this interaction inhibits host autophagy. Interacts with the viral DNA polymerase accessory subunit UL44. Interacts with host HSPA5.

The protein resides in the virion. Its subcellular location is the host cytoplasm. It is found in the host nucleus. In terms of biological role, inhibits the establishment of the antiviral state in the infected cell. Prevents the phosphorylation of the host eukaryotic translation initiation factor eIF-2alpha/EIF2S1 and thus the shutoff of viral and cellular protein synthesis by directly interacting with EIF2AK2/PKR. Prevents stress granule formation in response to eIF-2alpha/EIF2S1 phosphorylation, thereby rescuing viral replication and protein synthesis. Also inhibits host autophagy by interacting with host Beclin-1/BECN1. The protein is Protein TRS1 (TRS1) of Human cytomegalovirus (strain Merlin) (HHV-5).